The primary structure comprises 374 residues: Queuine tRNA-ribosyltransferase (374 aa).

Asp-91 serves as the catalytic Proton acceptor. Substrate contacts are provided by residues 91–95 (DSGGY), Asp-145, Gln-189, and Gly-216. Residues 247-253 (GVGTVPD) are RNA binding. Asp-266 functions as the Nucleophile in the catalytic mechanism. Residues 271-275 (TRNAR) are RNA binding; important for wobble base 34 recognition. Positions 304, 306, 309, and 335 each coordinate Zn(2+).

The protein belongs to the queuine tRNA-ribosyltransferase family. As to quaternary structure, homodimer. Within each dimer, one monomer is responsible for RNA recognition and catalysis, while the other monomer binds to the replacement base PreQ1. Zn(2+) serves as cofactor.

It carries out the reaction 7-aminomethyl-7-carbaguanine + guanosine(34) in tRNA = 7-aminomethyl-7-carbaguanosine(34) in tRNA + guanine. Its pathway is tRNA modification; tRNA-queuosine biosynthesis. Catalyzes the base-exchange of a guanine (G) residue with the queuine precursor 7-aminomethyl-7-deazaguanine (PreQ1) at position 34 (anticodon wobble position) in tRNAs with GU(N) anticodons (tRNA-Asp, -Asn, -His and -Tyr). Catalysis occurs through a double-displacement mechanism. The nucleophile active site attacks the C1' of nucleotide 34 to detach the guanine base from the RNA, forming a covalent enzyme-RNA intermediate. The proton acceptor active site deprotonates the incoming PreQ1, allowing a nucleophilic attack on the C1' of the ribose to form the product. After dissociation, two additional enzymatic reactions on the tRNA convert PreQ1 to queuine (Q), resulting in the hypermodified nucleoside queuosine (7-(((4,5-cis-dihydroxy-2-cyclopenten-1-yl)amino)methyl)-7-deazaguanosine). The chain is Queuine tRNA-ribosyltransferase from Leptospira interrogans serogroup Icterohaemorrhagiae serovar Lai (strain 56601).